Reading from the N-terminus, the 458-residue chain is UDP-N-acetylmuramate--L-alanine ligase (458 aa).

Gly-115–Thr-121 provides a ligand contact to ATP.

Belongs to the MurCDEF family.

Its subcellular location is the cytoplasm. It catalyses the reaction UDP-N-acetyl-alpha-D-muramate + L-alanine + ATP = UDP-N-acetyl-alpha-D-muramoyl-L-alanine + ADP + phosphate + H(+). It participates in cell wall biogenesis; peptidoglycan biosynthesis. Functionally, cell wall formation. This Anaeromyxobacter dehalogenans (strain 2CP-1 / ATCC BAA-258) protein is UDP-N-acetylmuramate--L-alanine ligase.